The sequence spans 110 residues: MALWMHLLTVLALLALWGPNTGQAFVSRHLCGSNLVETLYSVCQDDGFFYIPKDRRELEDPQVEQTELGMGLGAGGLQPLALEMALQKRGIVDQCCTGTCTRHQLQSYCN.

An N-terminal signal peptide occupies residues 1-24; that stretch reads MALWMHLLTVLALLALWGPNTGQA. 3 disulfide bridges follow: cysteine 31–cysteine 96, cysteine 43–cysteine 109, and cysteine 95–cysteine 100. Residues 57–87 constitute a propeptide, c peptide; the sequence is ELEDPQVEQTELGMGLGAGGLQPLALEMALQ.

This sequence belongs to the insulin family. Heterodimer of a B chain and an A chain linked by two disulfide bonds.

It localises to the secreted. Insulin decreases blood glucose concentration. It increases cell permeability to monosaccharides, amino acids and fatty acids. It accelerates glycolysis, the pentose phosphate cycle, and glycogen synthesis in liver. The chain is Insulin (INS) from Cavia porcellus (Guinea pig).